The primary structure comprises 1216 residues: RAB11-binding protein RELCH (1216 aa).

Residues 1–13 (MAAMAPGGGGSGS) show a composition bias toward gly residues. Disordered stretches follow at residues 1-67 (MAAM…GSSA) and 133-179 (NPGN…NRAG). A2 bears the N-acetylalanine mark. 2 positions are modified to phosphoserine: S20 and S22. Positions 21 to 31 (DSDEDDDEVAA) are enriched in acidic residues. A Phosphothreonine modification is found at T32. A phosphoserine mark is found at S54 and S56. Positions 142-154 (GTPPGMGAPGIPG) are enriched in low complexity. Phosphoserine occurs at positions 180 and 182. Residue T183 is modified to Phosphothreonine. S186 is modified (phosphoserine). A coiled-coil region spans residues 197 to 231 (NRETDERVAVLEFELRKAKETIQALRANLTKAAEH). The region spanning 255 to 287 (EKRALNFLVNEFLLKNNYKLTSITFSDENDDQD) is the LisH domain. A coiled-coil region spans residues 358-397 (LVQKLEDKISLLNNEKWSLMEQIRRLESEMDILKAEHFAT). Residue S385 is modified to Phosphoserine. A disordered region spans residues 409–473 (VWSSQKDSED…ELPPSSVSNK (65 aa)). The span at 429–440 (DQEKTKDVHLEI) shows a compositional bias: basic and acidic residues. At S453 the chain carries Phosphoserine. The tract at residues 497–779 (CRMSADSRLG…SSKAKLHGEV (283 aa)) is interaction with RAB11A and RAB11B. HEAT repeat units lie at residues 601 to 639 (LLPQ…RSSL) and 640 to 679 (VLSM…KYQQ). Position 792 is a phosphoserine (S792). One copy of the HEAT 3 repeat lies at 1004 to 1042 (VVPALITLSSDPEISVRIATIPAFGTIMETVIQRELLER). Phosphoserine is present on S1149.

In terms of assembly, interacts with RAB11A (VIA-GTP form). Interacts with RAB11B. Interacts (via the third HEAT repeat) with OSBP (via C-terminus). Found in a complex composed of RELCH, OSBP1 and RAB11A.

The protein resides in the recycling endosome. It localises to the golgi apparatus. Its subcellular location is the trans-Golgi network. Functionally, regulates intracellular cholesterol distribution from recycling endosomes to the trans-Golgi network through interactions with RAB11 and OSBP. Functions in membrane tethering and promotes OSBP-mediated cholesterol transfer between RAB11-bound recycling endosomes and OSBP-bound Golgi-like membranes. The sequence is that of RAB11-binding protein RELCH (Relch) from Mus musculus (Mouse).